Consider the following 103-residue polypeptide: Seminal ribonuclease (103 aa).

Disulfide bonds link Cys12/Cys70, Cys26/Cys81, Cys44/Cys96, and Cys51/Cys58. Residues 27 to 31 (KLVNT), Lys52, and Arg71 each bind substrate.

It belongs to the pancreatic ribonuclease family. Homodimer; disulfide-linked.

It is found in the secreted. The enzyme catalyses an [RNA] containing cytidine + H2O = an [RNA]-3'-cytidine-3'-phosphate + a 5'-hydroxy-ribonucleotide-3'-[RNA].. It catalyses the reaction an [RNA] containing uridine + H2O = an [RNA]-3'-uridine-3'-phosphate + a 5'-hydroxy-ribonucleotide-3'-[RNA].. In terms of biological role, this enzyme hydrolyzes both single- and double-stranded RNA. This is Seminal ribonuclease (SRN) from Cephalophus silvicultor (Yellow-backed duiker).